The primary structure comprises 446 residues: Methionine aminopeptidase 2-3 (446 aa).

A disordered region spans residues 14 to 116 (ITDAGANGAD…ENRYRTTSEE (103 aa)). Positions 61–76 (AKKKKNKKRKPKKKQP) are enriched in basic residues. A compositionally biased stretch (polar residues) spans 86–96 (PLSQLFPNNSY). The span at 98-116 (KGEEVEYKDENRYRTTSEE) shows a compositional bias: basic and acidic residues. His-199 contributes to the substrate binding site. A divalent metal cation contacts are provided by Asp-219, Asp-230, and His-299. His-307 contributes to the substrate binding site. A divalent metal cation is bound by residues Glu-332 and Glu-427.

The protein belongs to the peptidase M24A family. Methionine aminopeptidase eukaryotic type 2 subfamily. Co(2+) serves as cofactor. Zn(2+) is required as a cofactor. Requires Mn(2+) as cofactor. It depends on Fe(2+) as a cofactor.

Its subcellular location is the cytoplasm. The enzyme catalyses Release of N-terminal amino acids, preferentially methionine, from peptides and arylamides.. In terms of biological role, cotranslationally removes the N-terminal methionine from nascent proteins. The N-terminal methionine is often cleaved when the second residue in the primary sequence is small and uncharged (Met-Ala-, Cys, Gly, Pro, Ser, Thr, or Val). This chain is Methionine aminopeptidase 2-3, found in Aspergillus fumigatus (strain CBS 144.89 / FGSC A1163 / CEA10) (Neosartorya fumigata).